The chain runs to 447 residues: Methylenetetrahydrofolate--tRNA-(uracil-5-)-methyltransferase TrmFO (447 aa).

13 to 18 (GAGLAG) contributes to the FAD binding site.

This sequence belongs to the MnmG family. TrmFO subfamily. Requires FAD as cofactor.

Its subcellular location is the cytoplasm. The catalysed reaction is uridine(54) in tRNA + (6R)-5,10-methylene-5,6,7,8-tetrahydrofolate + NADH + H(+) = 5-methyluridine(54) in tRNA + (6S)-5,6,7,8-tetrahydrofolate + NAD(+). It catalyses the reaction uridine(54) in tRNA + (6R)-5,10-methylene-5,6,7,8-tetrahydrofolate + NADPH + H(+) = 5-methyluridine(54) in tRNA + (6S)-5,6,7,8-tetrahydrofolate + NADP(+). Functionally, catalyzes the folate-dependent formation of 5-methyl-uridine at position 54 (M-5-U54) in all tRNAs. The polypeptide is Methylenetetrahydrofolate--tRNA-(uracil-5-)-methyltransferase TrmFO (Streptococcus thermophilus (strain ATCC BAA-491 / LMD-9)).